Reading from the N-terminus, the 386-residue chain is MFELGETSPQNAQIKVIGIGGGGGNAIEHMIAENIDGVEFVCANTDSQALGRSNARVVLQLGDEITKGLGAGADPSVGRQAAEEARDRIREILEGTDMVFLTAGMGGGTGTGAAPIFAEVAKELGILTVAVVTKPFVFEGKKRMDVAEEGIKALGNYVDSLITIPNNKLLNVLGKNITLLNAFKAANNVLLGAVQGIADLITRPGLINVDFADVRTVMSEMGMAMMGTGVSSGENRAREAAEAAIASPLLEDVDFTGARGVLVNITAGMDLSIGEFEQVGEAVKAFASETATVVIGTVIDPDMSDELRVTVVVTGLGSHAGGGAGVPLKPVKNTKNDGTLDYHQLDRPTYMRNQEPSKRTVDLEEQRDRDFEYLDIPAFLRRLEED.

GTP-binding positions include 21 to 25 (GGGGN), 108 to 110 (GTG), Glu139, Arg143, and Asn187.

The protein belongs to the FtsZ family. Homodimer. Polymerizes to form a dynamic ring structure in a strictly GTP-dependent manner. Interacts directly with several other division proteins.

The protein localises to the cytoplasm. Functionally, essential cell division protein that forms a contractile ring structure (Z ring) at the future cell division site. The regulation of the ring assembly controls the timing and the location of cell division. One of the functions of the FtsZ ring is to recruit other cell division proteins to the septum to produce a new cell wall between the dividing cells. Binds GTP and shows GTPase activity. This Coxiella burnetii (strain RSA 493 / Nine Mile phase I) protein is Cell division protein FtsZ.